The sequence spans 102 residues: NADH-quinone oxidoreductase subunit K (102 aa).

3 consecutive transmembrane segments (helical) span residues 5–25 (LEHY…GIFV), 31–51 (IVIL…MVAF), and 66–86 (FVLT…VVFF).

This sequence belongs to the complex I subunit 4L family. NDH-1 is composed of 14 different subunits. Subunits NuoA, H, J, K, L, M, N constitute the membrane sector of the complex.

The protein resides in the cellular chromatophore membrane. The enzyme catalyses a quinone + NADH + 5 H(+)(in) = a quinol + NAD(+) + 4 H(+)(out). Its function is as follows. NDH-1 shuttles electrons from NADH, via FMN and iron-sulfur (Fe-S) centers, to quinones in the respiratory chain. The immediate electron acceptor for the enzyme in this species is believed to be ubiquinone. Couples the redox reaction to proton translocation (for every two electrons transferred, four hydrogen ions are translocated across the cytoplasmic membrane), and thus conserves the redox energy in a proton gradient. In Rhodobacter capsulatus (Rhodopseudomonas capsulata), this protein is NADH-quinone oxidoreductase subunit K.